Here is a 108-residue protein sequence, read N- to C-terminus: uncharacterized protein (108 aa).

Polar residues predominate over residues Met-1–Lys-10. Disordered regions lie at residues Met-1–Arg-63 and Val-83–Gln-108. Over residues Tyr-33–Pro-62 the composition is skewed to basic and acidic residues.

This is an uncharacterized protein from Gallid herpesvirus 2 (strain Chicken/Md5/ATCC VR-987) (GaHV-2).